Reading from the N-terminus, the 366-residue chain is Carbamoyl phosphate synthase small chain (366 aa).

The segment at 1–174 is CPSase; sequence MQEIPAILVL…GERYTVDNPD (174 aa). 3 residues coordinate L-glutamine: Ser48, Gly226, and Gly228. In terms of domain architecture, Glutamine amidotransferase type-1 spans 178 to 366; the sequence is HVVAFDYGIK…FTELMERLKN (189 aa). Cys256 (nucleophile) is an active-site residue. L-glutamine contacts are provided by Leu257, Gln260, Asn298, Gly300, and Phe301. Catalysis depends on residues His340 and Glu342.

It belongs to the CarA family. Composed of two chains; the small (or glutamine) chain promotes the hydrolysis of glutamine to ammonia, which is used by the large (or ammonia) chain to synthesize carbamoyl phosphate. Tetramer of heterodimers (alpha,beta)4.

It catalyses the reaction hydrogencarbonate + L-glutamine + 2 ATP + H2O = carbamoyl phosphate + L-glutamate + 2 ADP + phosphate + 2 H(+). The catalysed reaction is L-glutamine + H2O = L-glutamate + NH4(+). It functions in the pathway amino-acid biosynthesis; L-arginine biosynthesis; carbamoyl phosphate from bicarbonate: step 1/1. Its pathway is pyrimidine metabolism; UMP biosynthesis via de novo pathway; (S)-dihydroorotate from bicarbonate: step 1/3. Functionally, small subunit of the glutamine-dependent carbamoyl phosphate synthetase (CPSase). CPSase catalyzes the formation of carbamoyl phosphate from the ammonia moiety of glutamine, carbonate, and phosphate donated by ATP, constituting the first step of 2 biosynthetic pathways, one leading to arginine and/or urea and the other to pyrimidine nucleotides. The small subunit (glutamine amidotransferase) binds and cleaves glutamine to supply the large subunit with the substrate ammonia. In Chlorobaculum tepidum (strain ATCC 49652 / DSM 12025 / NBRC 103806 / TLS) (Chlorobium tepidum), this protein is Carbamoyl phosphate synthase small chain.